A 317-amino-acid chain; its full sequence is MTCKIIGCGGYLPSKIVSNDELAKFVETNDEWIRTRSGISQRHIADDNEYTSHLALKSAEQAIADARVSANDVDLIITCTTTSDNSFPSVATKLHGYLGLTNIPSFDLQAVCAGFVYGLQVADSLIASGKYKTILLIGAEKMTSLLDWNDRSTCVLFGDGAGSVILQRSSDDSGLIDSNIFSSGADYEILYTSGGISMNGTSGKIIMQGQKLFRHAIEKMQQSIEDLLHTNQFSVSGIDYFIPHQANIRIINKLAELLNIEEHKVVKTVEKHANCSAASIPLALSTLKASGKIKKGDILLFSAIGAGLTWGSALIRW.

Catalysis depends on residues Cys-112 and His-244. The interval 245 to 249 (QANIR) is ACP-binding. Asn-274 is an active-site residue.

It belongs to the thiolase-like superfamily. FabH family. In terms of assembly, homodimer.

Its subcellular location is the cytoplasm. The catalysed reaction is malonyl-[ACP] + acetyl-CoA + H(+) = 3-oxobutanoyl-[ACP] + CO2 + CoA. It functions in the pathway lipid metabolism; fatty acid biosynthesis. Catalyzes the condensation reaction of fatty acid synthesis by the addition to an acyl acceptor of two carbons from malonyl-ACP. Catalyzes the first condensation reaction which initiates fatty acid synthesis and may therefore play a role in governing the total rate of fatty acid production. Possesses both acetoacetyl-ACP synthase and acetyl transacylase activities. Its substrate specificity determines the biosynthesis of branched-chain and/or straight-chain of fatty acids. In Rickettsia akari (strain Hartford), this protein is Beta-ketoacyl-[acyl-carrier-protein] synthase III.